A 104-amino-acid polypeptide reads, in one-letter code: MQPNDITFYQRFEADILAGRKTITIRDKSESYFKAGDILRVGRFEDNQYFCTIEVLSVSPITLDELTEQHAKQENMGLAELREVIKTIYPNESEFWVIEIRLVN.

One can recognise an ASCH domain in the interval 6–102 (ITFYQRFEAD…SEFWVIEIRL (97 aa)). The Proton acceptor role is filled by K21. The active-site Nucleophile is the T24. Residue E74 is the Proton donor of the active site.

This sequence belongs to the N(4)-acetylcytidine amidohydrolase family.

It carries out the reaction N(4)-acetylcytidine + H2O = cytidine + acetate + H(+). It catalyses the reaction N(4)-acetyl-2'-deoxycytidine + H2O = 2'-deoxycytidine + acetate + H(+). The catalysed reaction is N(4)-acetylcytosine + H2O = cytosine + acetate + H(+). Catalyzes the hydrolysis of N(4)-acetylcytidine (ac4C). This is N(4)-acetylcytidine amidohydrolase from Haemophilus influenzae (strain PittEE).